A 131-amino-acid polypeptide reads, in one-letter code: Global transcriptional regulator Spx (131 aa).

The cysteines at positions 10 and 13 are disulfide-linked.

This sequence belongs to the ArsC family. Spx subfamily. Interacts with the C-terminal domain of the alpha subunit of the RNAP.

Its subcellular location is the cytoplasm. Under non-stress conditions, Spx is degraded by ClpXP. Efficient degradation by ClpXP requires the adapter protein SpxH/YjbH. Function, levels and solubility of Spx are affected by SpxH/YjbH aggregation and stress conditions. Global transcriptional regulator that plays a key role in stress response and exerts either positive or negative regulation of genes. Acts by interacting with the C-terminal domain of the alpha subunit of the RNA polymerase (RNAP). This interaction can enhance binding of RNAP to the promoter region of target genes and stimulate their transcription, or block interaction of RNAP with activator proteins and repress transcription. In terms of biological role, required for transcription of thioredoxin reductase (trxB). Modulates the expression of icaR, encoding a repressor of the biofilm operon icaADBC. Also controls the transcription of trfA, a gene implicated in cell wall antibiotic resistance, which in turn is required for degradation of MazE antitoxin, the unstable component of the MazEF toxin-antitoxin system, that neutralizes the endoribonuclease activity of MazF toxin. In Staphylococcus aureus (strain NCTC 8325 / PS 47), this protein is Global transcriptional regulator Spx.